A 416-amino-acid polypeptide reads, in one-letter code: Multifunctional CCA protein (416 aa).

Residues G8 and R11 each coordinate ATP. The CTP site is built by G8 and R11. Mg(2+) is bound by residues E21 and D23. ATP contacts are provided by R91, R137, and R140. 3 residues coordinate CTP: R91, R137, and R140. Residues 228 to 329 (TGIHTLMVLK…LKLFDAVDAW (102 aa)) enclose the HD domain.

This sequence belongs to the tRNA nucleotidyltransferase/poly(A) polymerase family. Bacterial CCA-adding enzyme type 1 subfamily. As to quaternary structure, monomer. Can also form homodimers and oligomers. Mg(2+) serves as cofactor. Requires Ni(2+) as cofactor.

It carries out the reaction a tRNA precursor + 2 CTP + ATP = a tRNA with a 3' CCA end + 3 diphosphate. The enzyme catalyses a tRNA with a 3' CCA end + 2 CTP + ATP = a tRNA with a 3' CCACCA end + 3 diphosphate. Functionally, catalyzes the addition and repair of the essential 3'-terminal CCA sequence in tRNAs without using a nucleic acid template. Adds these three nucleotides in the order of C, C, and A to the tRNA nucleotide-73, using CTP and ATP as substrates and producing inorganic pyrophosphate. tRNA 3'-terminal CCA addition is required both for tRNA processing and repair. Also involved in tRNA surveillance by mediating tandem CCA addition to generate a CCACCA at the 3' terminus of unstable tRNAs. While stable tRNAs receive only 3'-terminal CCA, unstable tRNAs are marked with CCACCA and rapidly degraded. This is Multifunctional CCA protein from Photorhabdus laumondii subsp. laumondii (strain DSM 15139 / CIP 105565 / TT01) (Photorhabdus luminescens subsp. laumondii).